The following is a 212-amino-acid chain: Shuttling pre-60S factor ECM1 (212 aa).

Disordered stretches follow at residues lysine 28–aspartate 48 and serine 188–glutamate 212. Serine 188 bears the Phosphoserine mark. A compositionally biased stretch (polar residues) spans glutamate 191–asparagine 201.

The protein belongs to the ECM1 family. In terms of assembly, associates with the pre-60S ribosomal particle and the nucleopore complex.

The protein resides in the nucleus. It is found in the nucleolus. Its subcellular location is the cytoplasm. In terms of biological role, pre-ribosomal factor involved in 60S ribosomal protein subunit export from the nucleus. The sequence is that of Shuttling pre-60S factor ECM1 (ECM1) from Saccharomyces cerevisiae (strain ATCC 204508 / S288c) (Baker's yeast).